We begin with the raw amino-acid sequence, 115 residues long: Large ribosomal subunit protein bL19 (115 aa).

Belongs to the bacterial ribosomal protein bL19 family.

Functionally, this protein is located at the 30S-50S ribosomal subunit interface and may play a role in the structure and function of the aminoacyl-tRNA binding site. This chain is Large ribosomal subunit protein bL19, found in Streptococcus mutans serotype c (strain ATCC 700610 / UA159).